The following is a 949-amino-acid chain: Sensor histidine kinase RcsC (949 aa).

Over 1–19 (MKYLASFRTTLKASRYMFR) the chain is Cytoplasmic. Residues 20-41 (ALALVLWLLIAFSSVFYIVNAL) form a helical membrane-spanning segment. Topologically, residues 42–313 (HQRESEIRQE…PVDKVLERIR (272 aa)) are periplasmic. Residues 314–335 (MVILNAILLNVLAGAALFTLAR) traverse the membrane as a helical segment. At 336–949 (MYERRIFIPA…AERVRKSRES (614 aa)) the chain is on the cytoplasmic side. One can recognise a PAS domain in the interval 357-425 (QFNRKIVASA…VLTSNNTNLQ (69 aa)). The 217-residue stretch at 476–692 (TVSHELRTPL…QFTVRIPLYG (217 aa)) folds into the Histidine kinase domain. A Phosphohistidine; by autocatalysis modification is found at histidine 479. The region spanning 705–805 (SGKRCWLAVR…ARIYLIEMES (101 aa)) is the ABL domain. The region spanning 826–940 (MILVVDDHPI…VIKQTLTVYA (115 aa)) is the Response regulatory domain. A 4-aspartylphosphate modification is found at aspartate 875.

This sequence belongs to the RcsC family. Interacts with RcsD. In terms of processing, autophosphorylated. Activation probably requires a transfer of a phosphate group from a His in the transmitter domain to an Asp in the receiver domain.

The protein resides in the cell inner membrane. The catalysed reaction is ATP + protein L-histidine = ADP + protein N-phospho-L-histidine.. Component of the Rcs signaling system, which controls transcription of numerous genes. RcsC functions as a membrane-associated protein kinase that phosphorylates RcsD in response to environmental signals. The phosphoryl group is then transferred to the response regulator RcsB. Involved in regulation of K30 capsular polysaccharide synthesis. The polypeptide is Sensor histidine kinase RcsC (Escherichia coli).